The sequence spans 215 residues: Uracil phosphoribosyltransferase (215 aa).

30-34 (KGMVR) serves as a coordination point for GTP. 5-phospho-alpha-D-ribose 1-diphosphate contacts are provided by residues Arg-80, Arg-105, and 139–147 (DPMIATAST). Uracil-binding positions include Ile-202 and 207–209 (GDA). Asp-208 contacts 5-phospho-alpha-D-ribose 1-diphosphate.

Belongs to the UPRTase family. The cofactor is Mg(2+).

The catalysed reaction is UMP + diphosphate = 5-phospho-alpha-D-ribose 1-diphosphate + uracil. The protein operates within pyrimidine metabolism; UMP biosynthesis via salvage pathway; UMP from uracil: step 1/1. Its activity is regulated as follows. Allosterically activated by GTP. In terms of biological role, catalyzes the conversion of uracil and 5-phospho-alpha-D-ribose 1-diphosphate (PRPP) to UMP and diphosphate. The protein is Uracil phosphoribosyltransferase of Metallosphaera sedula (strain ATCC 51363 / DSM 5348 / JCM 9185 / NBRC 15509 / TH2).